A 163-amino-acid chain; its full sequence is Late embryogenesis abundant protein Dc3 (163 aa).

Disordered stretches follow at residues 1–117 (MASH…GGLM) and 139–163 (FGMAGADEEEKTTTTRVTRSSARTE). Composition is skewed to basic and acidic residues over residues 28–56 (TMKDKAQAAKDKASEMAGSARDRTVESKD), 67–84 (GAVKDKTCETAQAAKEKT), and 91–113 (TKEKASEMGESAKETAVAGKEKT). 6 repeat units span residues 32 to 42 (KAQAAKDKASE), 43 to 53 (MAGSARDRTVE), 65 to 75 (KAGAVKDKTCE), 76 to 86 (TAQAAKEKTGG), 87 to 97 (AMQATKEKASE), and 103 to 115 (KETAVAGKEKTGG). The 6 X 11 AA approximate repeats stretch occupies residues 32–115 (KAQAAKDKAS…AVAGKEKTGG (84 aa)). Residues 152 to 163 (TTRVTRSSARTE) are compositionally biased toward low complexity.

This sequence belongs to the LEA type 4 family.

The protein is Late embryogenesis abundant protein Dc3 of Daucus carota (Wild carrot).